The primary structure comprises 523 residues: Cytochrome P450 52A3-B (523 aa).

Residues 17-34 (WYTILFGAAFTYFLSIAL) form a helical membrane-spanning segment. Cys-471 is a binding site for heme.

Belongs to the cytochrome P450 family. Heme is required as a cofactor.

Its subcellular location is the membrane. Together with an NADPH cytochrome P450 the enzyme system catalyzes the terminal hydroxylation as the first step in the assimilation of alkanes and fatty acids. The protein is Cytochrome P450 52A3-B (CYP52A3-B) of Candida maltosa (Yeast).